Reading from the N-terminus, the 299-residue chain is Small ribosomal subunit protein uS2 (299 aa).

A disordered region spans residues 210–299 (AEKEEQTQVV…GAATDNSWAS (90 aa)). A compositionally biased stretch (polar residues) spans 275–285 (WASTGTATVGP).

This sequence belongs to the universal ribosomal protein uS2 family. As to quaternary structure, component of the small ribosomal subunit. Mature ribosomes consist of a small (40S) and a large (60S) subunit. The 40S subunit contains about 33 different proteins and 1 molecule of RNA (18S). The 60S subunit contains about 49 different proteins and 3 molecules of RNA (28S, 5.8S and 5S). Interacts with ribosomal protein S21.

The protein localises to the cytoplasm. Its function is as follows. Required for the assembly and/or stability of the 40S ribosomal subunit. Required for the processing of the 20S rRNA-precursor to mature 18S rRNA in a late step of the maturation of 40S ribosomal subunits. The chain is Small ribosomal subunit protein uS2 from Ornithodoros parkeri (Soft tick).